The following is a 741-amino-acid chain: NAD(P)H-quinone oxidoreductase subunit 5, chloroplastic (741 aa).

16 helical membrane passes run 9-29, 40-60, 89-109, 125-145, 147-167, 185-205, 219-239, 258-278, 289-311, 327-347, 354-374, 396-416, 425-445, 549-569, 605-625, and 721-741; these read WIIPFLPLPVPMLIGLGLLLF, WAFQSVLLLSIVMIFSMNLSI, IDPLTSIMSILITTVGILVLI, FAYMSFFSTSMLGLVTSSNLI, IYIFWELVGMCSYLLIGFWFT, GDFGLLLGILGFYWITGSFEF, NQVNFLFVTLCAVLLFAGAIA, TPISALIHAATMVAAGIFLVA, HIMNFISLIGIITVFLGATLALA, LGYMMLALGMGSYRSALFHLI, ALLFLGSGSVIHSMETLVGYC, NSFLLGTLSLCGIPPLACFWS, WLYSPIFAIIAWSTAGLTAFY, LFPILILFIFTLFVGFLGIPL, LFSVSIASFGIFIAFFLYKPV, and YLFFYFSYVSIFLVIYYFLNL.

Belongs to the complex I subunit 5 family. NDH is composed of at least 16 different subunits, 5 of which are encoded in the nucleus.

It is found in the plastid. It localises to the chloroplast thylakoid membrane. It carries out the reaction a plastoquinone + NADH + (n+1) H(+)(in) = a plastoquinol + NAD(+) + n H(+)(out). It catalyses the reaction a plastoquinone + NADPH + (n+1) H(+)(in) = a plastoquinol + NADP(+) + n H(+)(out). Its function is as follows. NDH shuttles electrons from NAD(P)H:plastoquinone, via FMN and iron-sulfur (Fe-S) centers, to quinones in the photosynthetic chain and possibly in a chloroplast respiratory chain. The immediate electron acceptor for the enzyme in this species is believed to be plastoquinone. Couples the redox reaction to proton translocation, and thus conserves the redox energy in a proton gradient. The protein is NAD(P)H-quinone oxidoreductase subunit 5, chloroplastic (ndhF) of Symphyotrichum cordifolium (Heart-leaved aster).